The following is a 194-amino-acid chain: uncharacterized protein (194 aa).

An N-terminal signal peptide occupies residues M1–A29. Positions K104 to D131 form a coiled coil. The helical transmembrane segment at Y149–I171 threads the bilayer.

The protein resides in the membrane. This is an uncharacterized protein from Bacillus subtilis (strain 168).